Consider the following 520-residue polypeptide: Cytochrome P450 4F2 (520 aa).

The propeptide occupies 1–4 (MSQL). 2 residues coordinate heme: E328 and C468.

Belongs to the cytochrome P450 family. Requires heme as cofactor. Liver. Also present in kidney: specifically expressed in the S2 and S3 segments of proximal tubules in cortex and outer medulla.

It localises to the microsome membrane. Its subcellular location is the endoplasmic reticulum membrane. The catalysed reaction is an organic molecule + reduced [NADPH--hemoprotein reductase] + O2 = an alcohol + oxidized [NADPH--hemoprotein reductase] + H2O + H(+). It carries out the reaction (5Z,8Z,11Z,14Z)-eicosatetraenoate + reduced [NADPH--hemoprotein reductase] + O2 = 20-hydroxy-(5Z,8Z,11Z,14Z)-eicosatetraenoate + oxidized [NADPH--hemoprotein reductase] + H2O + H(+). The enzyme catalyses (5Z,8Z,11Z)-eicosatrienoate + reduced [NADPH--hemoprotein reductase] + O2 = 20-hydroxy-(5Z,8Z,11Z)-eicosatrienoate + oxidized [NADPH--hemoprotein reductase] + H2O + H(+). It catalyses the reaction (5Z,8Z,11Z,14Z,17Z)-eicosapentaenoate + reduced [NADPH--hemoprotein reductase] + O2 = 20-hydroxy-(5Z,8Z,11Z,14Z,17Z)-eicosapentaenoate + oxidized [NADPH--hemoprotein reductase] + H2O + H(+). The catalysed reaction is (4Z,7Z,10Z,13Z,16Z,19Z)-docosahexaenoate + reduced [NADPH--hemoprotein reductase] + O2 = 22-hydroxy-(4Z,7Z,10Z,13Z,16Z,19Z)-docosahexaenoate + oxidized [NADPH--hemoprotein reductase] + H2O + H(+). It carries out the reaction 8,9-epoxy-(5Z,11Z,14Z)-eicosatrienoate + reduced [NADPH--hemoprotein reductase] + O2 = 20-hydroxy-8,9-epoxy-(5Z,11Z,14Z)-eicosatrienoate + oxidized [NADPH--hemoprotein reductase] + H2O + H(+). The enzyme catalyses (9S,10R)-epoxy-octadecanoate + reduced [NADPH--hemoprotein reductase] + O2 = 18-hydroxy-(9S,10R)-epoxy-octadecanoate + oxidized [NADPH--hemoprotein reductase] + H2O + H(+). It catalyses the reaction (9R,10S)-epoxy-octadecanoate + reduced [NADPH--hemoprotein reductase] + O2 = 18-hydroxy-(9R,10S)-epoxy-octadecanoate + oxidized [NADPH--hemoprotein reductase] + H2O + H(+). The catalysed reaction is 12,13-epoxy-(9Z)-octadecenoate + reduced [NADPH--hemoprotein reductase] + O2 = 18-hydroxy-12,13-epoxy-(9Z)-octadecenoate + oxidized [NADPH--hemoprotein reductase] + H2O + H(+). It carries out the reaction 9,10-epoxy-(12Z)-octadecenoate + reduced [NADPH--hemoprotein reductase] + O2 = 18-hydroxy-9,10-epoxy-(12Z)-octadecenoate + oxidized [NADPH--hemoprotein reductase] + H2O + H(+). The enzyme catalyses 8-hydroxy-(5Z,9E,11Z,14Z)-eicosatetraenoate + reduced [NADPH--hemoprotein reductase] + O2 = 8,20-dihydroxy-(5Z,9E,11Z,14Z)-eicosatetraenoate + oxidized [NADPH--hemoprotein reductase] + H2O + H(+). It catalyses the reaction 12-hydroxy-(5Z,8Z,10E,14Z)-eicosatetraenoate + reduced [NADPH--hemoprotein reductase] + O2 = 12,20-dihydroxy-(5Z,8Z,10E,14Z)-eicosatetraenoate + oxidized [NADPH--hemoprotein reductase] + H2O + H(+). The catalysed reaction is 12-hydroxyoctadecanoate + reduced [NADPH--hemoprotein reductase] + O2 = 12,18-dihydroxyoctadecanoate + oxidized [NADPH--hemoprotein reductase] + H2O + H(+). It carries out the reaction docosanoate + reduced [NADPH--hemoprotein reductase] + O2 = 22-hydroxydocosanoate + oxidized [NADPH--hemoprotein reductase] + H2O + H(+). The enzyme catalyses 22-hydroxydocosanoate + reduced [NADPH--hemoprotein reductase] + O2 = 22-oxodocosanoate + oxidized [NADPH--hemoprotein reductase] + 2 H2O + H(+). It catalyses the reaction 22-oxodocosanoate + reduced [NADPH--hemoprotein reductase] + O2 = docosanedioate + oxidized [NADPH--hemoprotein reductase] + H2O + 2 H(+). The catalysed reaction is tetracosanoate + reduced [NADPH--hemoprotein reductase] + O2 = 24-hydroxytetracosanoate + oxidized [NADPH--hemoprotein reductase] + H2O + H(+). It carries out the reaction hexacosanoate + reduced [NADPH--hemoprotein reductase] + O2 = 26-hydroxyhexacosanoate + oxidized [NADPH--hemoprotein reductase] + H2O + H(+). The enzyme catalyses 26-hydroxyhexacosanoate + reduced [NADPH--hemoprotein reductase] + O2 = 26-oxohexacosanoate + oxidized [NADPH--hemoprotein reductase] + 2 H2O + H(+). It catalyses the reaction 26-oxohexacosanoate + reduced [NADPH--hemoprotein reductase] + O2 = hexacosanedioate + oxidized [NADPH--hemoprotein reductase] + H2O + 2 H(+). The catalysed reaction is 3-hydroxyoctadecanoate + reduced [NADPH--hemoprotein reductase] + O2 = 3,18-dihydroxyoctadecanoate + oxidized [NADPH--hemoprotein reductase] + H2O + H(+). It carries out the reaction 3-hydroxyhexadecanoate + reduced [NADPH--hemoprotein reductase] + O2 = 3,16-dihydroxyhexadecanoate + oxidized [NADPH--hemoprotein reductase] + H2O + H(+). The enzyme catalyses leukotriene B4 + reduced [NADPH--hemoprotein reductase] + O2 = 20-hydroxy-leukotriene B4 + oxidized [NADPH--hemoprotein reductase] + H2O + H(+). It catalyses the reaction 6-trans-leukotriene B4 + reduced [NADPH--hemoprotein reductase] + O2 = 20-hydroxy-6-trans-leukotriene B4 + oxidized [NADPH--hemoprotein reductase] + H2O + H(+). The catalysed reaction is lipoxin A4 + reduced [NADPH--hemoprotein reductase] + O2 = 20-hydroxy-lipoxin A4 + oxidized [NADPH--hemoprotein reductase] + H2O + H(+). It carries out the reaction menaquinone-4 + reduced [NADPH--hemoprotein reductase] + O2 = omega-hydroxymenaquinone-4 + oxidized [NADPH--hemoprotein reductase] + H2O + H(+). The enzyme catalyses phylloquinone + reduced [NADPH--hemoprotein reductase] + O2 = omega-hydroxyphylloquinone + oxidized [NADPH--hemoprotein reductase] + H2O + H(+). It catalyses the reaction (+)-alpha-tocopherol + reduced [NADPH--hemoprotein reductase] + O2 = 13-hydroxy-alpha-tocopherol + oxidized [NADPH--hemoprotein reductase] + H2O + H(+). The catalysed reaction is gamma-tocopherol + NADPH + O2 + H(+) = 13-hydroxy-gamma-tocopherol + NADP(+) + H2O. It participates in lipid metabolism; arachidonate metabolism. It functions in the pathway lipid metabolism; leukotriene B4 degradation. The protein operates within cofactor degradation; phylloquinone degradation. With respect to regulation, inhibited by dietary sesamin. Its function is as follows. A cytochrome P450 monooxygenase involved in the metabolism of various endogenous substrates, including fatty acids, eicosanoids and vitamins. Mechanistically, uses molecular oxygen inserting one oxygen atom into a substrate, and reducing the second into a water molecule, with two electrons provided by NADPH via cytochrome P450 reductase (CPR; NADPH-ferrihemoprotein reductase). Catalyzes predominantly the oxidation of the terminal carbon (omega-oxidation) of long- and very long-chain fatty acids. Displays high omega-hydroxylase activity toward polyunsaturated fatty acids (PUFAs). Participates in the conversion of arachidonic acid to omega-hydroxyeicosatetraenoic acid (20-HETE), a signaling molecule acting both as vasoconstrictive and natriuretic with overall effect on arterial blood pressure. Plays a role in the oxidative inactivation of eicosanoids, including both pro-inflammatory and anti-inflammatory mediators such as leukotriene B4 (LTB4), lipoxin A4 (LXA4), and several HETEs. Catalyzes omega-hydroxylation of 3-hydroxy fatty acids. Converts monoepoxides of linoleic acid leukotoxin and isoleukotoxin to omega-hydroxylated metabolites. Contributes to the degradation of very long-chain fatty acids (VLCFAs) by catalyzing successive omega-oxidations and chain shortening. Plays an important role in vitamin metabolism by chain shortening. Catalyzes omega-hydroxylation of the phytyl chain of tocopherols (forms of vitamin E), with preference for gamma-tocopherols over alpha-tocopherols, thus promoting retention of alpha-tocopherols in tissues. Omega-hydroxylates and inactivates phylloquinone (vitamin K1), and menaquinone-4 (MK-4, a form of vitamin K2), both acting as cofactors in blood coagulation. This chain is Cytochrome P450 4F2, found in Homo sapiens (Human).